The chain runs to 2415 residues: Bradyzoite-formation deficient protein 1 (2415 aa).

3 disordered regions span residues 369–392 (WNKP…PEET), 418–481 (HLTS…PYTR), and 761–845 (DGCG…QDTQ). A compositionally biased stretch (basic residues) spans 419 to 429 (LTSRQHPNPRP). The span at 430 to 443 (RMKEEHCGREREVL) shows a compositional bias: basic and acidic residues. Composition is skewed to polar residues over residues 444–460 (SSEQ…TPAS) and 832–843 (PRTTSSSSYGQD). The region spanning 921 to 968 (WSAEEDASLAELVSRKGFKWALISSQLTGAFGIPRTGKQCRERWFNHV) is the Myb-like domain. Residues 969–1023 (NPEVKKGDWSAEEDAMILMLQNELGNRWATIAKKLRGRTENAVKNRFISLSNARL) form the HTH myb-type domain. Residues 996–1019 (WATIAKKLRGRTENAVKNRFISLS) constitute a DNA-binding region (H-T-H motif). Disordered stretches follow at residues 1027–1050 (RPKR…KSSG), 1098–1127 (VSRP…LKNT), 1206–1270 (NDER…NGLD), 1319–1343 (PACD…AQRQ), 1501–1521 (QLWT…QQHE), 1905–1932 (VSRD…TSQS), 1959–2013 (RVRW…GSTA), and 2161–2222 (GTDA…EMQD). A compositionally biased stretch (polar residues) spans 1036-1050 (DCFSNRRTGSGKSSG). A compositionally biased stretch (basic and acidic residues) spans 1227 to 1237 (AHEHADIARSD). Polar residues-rich tracts occupy residues 1327-1343 (PQNS…AQRQ) and 1501-1520 (QLWT…NQQH). Over residues 1974–1985 (SVSSGASNSATT) the composition is skewed to polar residues. A compositionally biased stretch (basic and acidic residues) spans 2181–2197 (QAHRRDGHDMQRVQRCD).

It is found in the nucleus. Functionally, master transcription factor that controls the differentiation of acute-stage tachyzoite parasites into chronic-stage bradyzoites, which form intracellular cysts resistant to immune clearance and existing therapies. Sufficient to drive differentiation into bradyzoite stage. Following translation in response to stress conditions, binds to the promoter of many chronic stage-specific genes and promotes their expression, thereby driving differentiation into bradyzoites. In Toxoplasma gondii (strain ATCC 50611 / Me49), this protein is Bradyzoite-formation deficient protein 1.